Here is a 219-residue protein sequence, read N- to C-terminus: Probable nicotinate-nucleotide adenylyltransferase (219 aa).

It belongs to the NadD family.

It catalyses the reaction nicotinate beta-D-ribonucleotide + ATP + H(+) = deamido-NAD(+) + diphosphate. The protein operates within cofactor biosynthesis; NAD(+) biosynthesis; deamido-NAD(+) from nicotinate D-ribonucleotide: step 1/1. Functionally, catalyzes the reversible adenylation of nicotinate mononucleotide (NaMN) to nicotinic acid adenine dinucleotide (NaAD). The polypeptide is Probable nicotinate-nucleotide adenylyltransferase (Chromohalobacter salexigens (strain ATCC BAA-138 / DSM 3043 / CIP 106854 / NCIMB 13768 / 1H11)).